We begin with the raw amino-acid sequence, 232 residues long: GTP cyclohydrolase III (232 aa).

Belongs to the archaeal-type GTP cyclohydrolase family.

It carries out the reaction GTP + 3 H2O = 2-amino-5-formylamino-6-(5-phospho-D-ribosylamino)pyrimidin-4(3H)-one + 2 phosphate + 2 H(+). Catalyzes the formation of 2-amino-5-formylamino-6-ribofuranosylamino-4(3H)-pyrimidinone ribonucleotide monophosphate and inorganic phosphate from GTP. Also has an independent pyrophosphate phosphohydrolase activity. The sequence is that of GTP cyclohydrolase III from Saccharolobus islandicus (strain Y.N.15.51 / Yellowstone #2) (Sulfolobus islandicus).